Consider the following 85-residue polypeptide: Major outer membrane protein 1 (85 aa).

An N-terminal signal peptide occupies residues 1–18 (MEAREVEEMRRSRLLTLG). Residues 22-42 (YTAVIALAALVLVMGALGLVL) traverse the membrane as a helical segment.

As to quaternary structure, forms extremely stable complexes with apparent masses of 150, 50, 45 and 38 kDa. Found in a ring-shaped complex of 7 nm diameter with a 2 nm channel through the middle. Complete denaturation requires temperatures over 110 degrees Celsius.

The protein localises to the cell outer membrane. Its function is as follows. The most abundant protein of the outer membrane, it forms a pore through it. This Ignicoccus hospitalis (strain KIN4/I / DSM 18386 / JCM 14125) protein is Major outer membrane protein 1 (ihomp1).